A 199-amino-acid chain; its full sequence is Nicotinamide riboside kinase 1 (199 aa).

Residue 10-18 (GVTNSGKTT) participates in ATP binding. The Mg(2+) site is built by threonine 17 and aspartate 36. Aspartate 36 acts as the Proton acceptor in catalysis. Substrate-binding positions include 36–39 (DDFF) and 55–56 (YD). Arginine 128 provides a ligand contact to ATP. Residues arginine 129 and 134-135 (YQ) contribute to the substrate site. Residues 132–134 (RVY) and 172–174 (KSE) contribute to the ATP site.

This sequence belongs to the uridine kinase family. NRK subfamily. As to quaternary structure, monomer.

The catalysed reaction is beta-nicotinamide D-riboside + ATP = beta-nicotinamide D-ribonucleotide + ADP + H(+). The enzyme catalyses beta-D-ribosylnicotinate + ATP = nicotinate beta-D-ribonucleotide + ADP + H(+). It functions in the pathway cofactor biosynthesis; NAD(+) biosynthesis. Catalyzes the phosphorylation of nicotinamide riboside (NR) and nicotinic acid riboside (NaR) to form nicotinamide mononucleotide (NMN) and nicotinic acid mononucleotide (NaMN). The enzyme also phosphorylates the antitumor drugs tiazofurin and 3-deazaguanosine. The sequence is that of Nicotinamide riboside kinase 1 (NMRK1) from Homo sapiens (Human).